Reading from the N-terminus, the 668-residue chain is Penicillin-binding protein 3 (668 aa).

A helical membrane pass occupies residues 7–23 (LLVFLCVGLIGLIGCSK). Catalysis depends on Ser-410, which acts as the Acyl-ester intermediate.

The protein belongs to the transpeptidase family.

The protein localises to the cell membrane. The protein resides in the forespore inner membrane. It localises to the forespore outer membrane. Its subcellular location is the membrane raft. The enzyme catalyses Preferential cleavage: (Ac)2-L-Lys-D-Ala-|-D-Ala. Also transpeptidation of peptidyl-alanyl moieties that are N-acyl substituents of D-alanine.. It functions in the pathway cell wall biogenesis; peptidoglycan biosynthesis. In terms of biological role, penicillin-binding proteins (PBPs) function in the late steps of murein biosynthesis. Probably required for both cortical and vegetative peptidoglycan synthesis. Although not usually required for cell division, in the absence of PBP 2B (pbpB) it becomes essential. Confers resistance to oxacillin and cephalexin. The polypeptide is Penicillin-binding protein 3 (Bacillus subtilis (strain 168)).